We begin with the raw amino-acid sequence, 288 residues long: ATP phosphoribosyltransferase (288 aa).

Belongs to the ATP phosphoribosyltransferase family. Long subfamily. Requires Mg(2+) as cofactor.

The protein localises to the cytoplasm. The catalysed reaction is 1-(5-phospho-beta-D-ribosyl)-ATP + diphosphate = 5-phospho-alpha-D-ribose 1-diphosphate + ATP. Its pathway is amino-acid biosynthesis; L-histidine biosynthesis; L-histidine from 5-phospho-alpha-D-ribose 1-diphosphate: step 1/9. Its activity is regulated as follows. Feedback inhibited by histidine. Functionally, catalyzes the condensation of ATP and 5-phosphoribose 1-diphosphate to form N'-(5'-phosphoribosyl)-ATP (PR-ATP). Has a crucial role in the pathway because the rate of histidine biosynthesis seems to be controlled primarily by regulation of HisG enzymatic activity. This Methanococcus maripaludis (strain DSM 14266 / JCM 13030 / NBRC 101832 / S2 / LL) protein is ATP phosphoribosyltransferase.